The primary structure comprises 270 residues: Phospholysine phosphohistidine inorganic pyrophosphate phosphatase (270 aa).

Residues aspartate 17 and serine 19 each coordinate Mg(2+). Residues 17–19, 54–55, and lysine 189 contribute to the substrate site; these read DIS and TN. Residue aspartate 214 participates in Mg(2+) binding.

The protein belongs to the HAD-like hydrolase superfamily. As to quaternary structure, homodimer. The cofactor is Mg(2+). As to expression, expressed in brain, and at lower levels in liver and kidney. Detected in thyroid (at protein level). Expressed in liver, kidney and moderately in brain.

The protein resides in the cytoplasm. The protein localises to the nucleus. The catalysed reaction is diphosphate + H2O = 2 phosphate + H(+). Phosphatase that hydrolyzes imidodiphosphate, 3-phosphohistidine and 6-phospholysine. Has broad substrate specificity and can also hydrolyze inorganic diphosphate, but with lower efficiency. The sequence is that of Phospholysine phosphohistidine inorganic pyrophosphate phosphatase (LHPP) from Homo sapiens (Human).